The chain runs to 155 residues: MSTILNKVLNFVGWETEDEEEDVETVEESEDVEEEESKKPQFIQPLSSRRTQNKVVNIHSASQFKVIVMQPESFNDAKDVCDHLKSKKPVVVNLGSVQKEVAQRIVDFLSGSVYALDGSIQKVSNDIFIVAPHNVDIMGDFKGDITGKAVFPWLK.

A compositionally biased stretch (acidic residues) spans 16 to 35 (TEDEEEDVETVEESEDVEEE). Residues 16-44 (TEDEEEDVETVEESEDVEEEESKKPQFIQ) form a disordered region.

The protein belongs to the SepF family. As to quaternary structure, homodimer. Interacts with FtsZ.

The protein localises to the cytoplasm. Functionally, cell division protein that is part of the divisome complex and is recruited early to the Z-ring. Probably stimulates Z-ring formation, perhaps through the cross-linking of FtsZ protofilaments. Its function overlaps with FtsA. The chain is Cell division protein SepF from Acetivibrio thermocellus (strain ATCC 27405 / DSM 1237 / JCM 9322 / NBRC 103400 / NCIMB 10682 / NRRL B-4536 / VPI 7372) (Clostridium thermocellum).